The sequence spans 466 residues: MLYGKENRDEAEFLEPIFGSESEQVDLPKYKLAQQSIEPRVAYQLVQDEMLDEGNARLNLATFCQTYMEPEAVKLMSQTLEKNAIDKSEYPRTTEIENRCVNMIADLWNASEKEKFMGTSTIGSSEACMLGGMAMKFSWRKRAEKLGLDINAKKPNLVISSGYQVCWEKFCVYWDIEMREVPMDREHMSINLEKVMDYVDEYTIGVVGIMGITYTGRYDDIKALDNLIEEYNKQTDYKVYIHVDAASGGLYAPFVEPELEWDFRLKNVISINTSGHKYGLVYPGVGWVLWRDKKYLPEELIFKVSYLGGELPTMAINFSHSASQLIGQYYNFVRYGFDGYKAIHERTHKVAMYLAEEIEKTGMFEIMNDGAQLPIVCYKLKENSNRGWNLYDLADRLLMKGWQVPAYPLPKNLENEIIQRLVIRADFGMNMAFNYVQDMQEAIDALNKAHILFHQEPENKTYGFTH.

Lysine 277 bears the N6-(pyridoxal phosphate)lysine mark.

This sequence belongs to the group II decarboxylase family. The cofactor is pyridoxal 5'-phosphate.

It carries out the reaction L-glutamate + H(+) = 4-aminobutanoate + CO2. In terms of biological role, converts internalized glutamate to GABA and increases the internal pH. Involved in glutamate-dependent acid resistance. The protein is Glutamate decarboxylase (gadB) of Lactococcus lactis subsp. cremoris (strain MG1363).